The following is a 194-amino-acid chain: Small ribosomal subunit protein uS7 (194 aa).

Belongs to the universal ribosomal protein uS7 family. In terms of assembly, part of the 30S ribosomal subunit.

Functionally, one of the primary rRNA binding proteins, it binds directly to 16S rRNA where it nucleates assembly of the head domain of the 30S subunit. Is located at the subunit interface close to the decoding center. In Archaeoglobus fulgidus (strain ATCC 49558 / DSM 4304 / JCM 9628 / NBRC 100126 / VC-16), this protein is Small ribosomal subunit protein uS7.